Here is a 127-residue protein sequence, read N- to C-terminus: Large ribosomal subunit protein bL17 (127 aa).

This sequence belongs to the bacterial ribosomal protein bL17 family. As to quaternary structure, part of the 50S ribosomal subunit. Contacts protein L32.

This Photobacterium profundum (strain SS9) protein is Large ribosomal subunit protein bL17.